The primary structure comprises 349 residues: Protein arginine N-methyltransferase 6 (349 aa).

In terms of domain architecture, SAM-dependent MTase PRMT-type spans 17 to 324; that stretch reads DYMYFDSYSD…EENSRHICIR (308 aa). Positions 30, 39, 63, 85, and 114 each coordinate S-adenosyl-L-methionine. Active-site residues include glutamate 128 and glutamate 137.

It belongs to the class I-like SAM-binding methyltransferase superfamily. Protein arginine N-methyltransferase family. PRMT6 subfamily.

The protein localises to the nucleus. The catalysed reaction is L-arginyl-[protein] + 2 S-adenosyl-L-methionine = N(omega),N(omega)-dimethyl-L-arginyl-[protein] + 2 S-adenosyl-L-homocysteine + 2 H(+). In terms of biological role, arginine methyltransferase that can catalyze the formation of both omega-N monomethylarginine (MMA) and asymmetrical dimethylarginine (aDMA), with a strong preference for the formation of aDMA. Preferentially methylates arginyl residues present in a glycine and arginine-rich domain and displays preference for monomethylated substrates. Specifically mediates the asymmetric dimethylation of histone H3 'Arg-2' to form H3R2me2a. H3R2me2a represents a specific tag for epigenetic transcriptional repression and is mutually exclusive with methylation on histone H3 'Lys-4' (H3K4me2 and H3K4me3). Acts as a transcriptional repressor of various genes such as HOXA2, THBS1 and TP53. Repression of TP53 blocks cellular senescence. Also methylates histone H2A and H4 'Arg-3' (H2AR3me and H4R3me, respectively). Acts as a regulator of DNA base excision during DNA repair by mediating the methylation of DNA polymerase beta (POLB), leading to the stimulation of its polymerase activity by enhancing DNA binding and processivity. Methylates HMGA1. Regulates alternative splicing events. Acts as a transcriptional coactivator of a number of steroid hormone receptors including ESR1, ESR2, PGR and NR3C1. This Danio rerio (Zebrafish) protein is Protein arginine N-methyltransferase 6 (prmt6).